The sequence spans 430 residues: UDP-N-acetylmuramoylalanine--D-glutamate ligase (430 aa).

105-111 (GSNGKTT) is an ATP binding site.

Belongs to the MurCDEF family.

Its subcellular location is the cytoplasm. It catalyses the reaction UDP-N-acetyl-alpha-D-muramoyl-L-alanine + D-glutamate + ATP = UDP-N-acetyl-alpha-D-muramoyl-L-alanyl-D-glutamate + ADP + phosphate + H(+). The protein operates within cell wall biogenesis; peptidoglycan biosynthesis. Cell wall formation. Catalyzes the addition of glutamate to the nucleotide precursor UDP-N-acetylmuramoyl-L-alanine (UMA). The sequence is that of UDP-N-acetylmuramoylalanine--D-glutamate ligase from Pseudothermotoga lettingae (strain ATCC BAA-301 / DSM 14385 / NBRC 107922 / TMO) (Thermotoga lettingae).